The sequence spans 433 residues: MFDITLVHAREILDSRGNPTVEAEVTLSGGAVGRAAVPSGASTGEHEAVELRDGDNARYLGKGVLKAVENVEGEIAQALGGMDASQQRDIDMRMLDLDGTENKGRLGANAILAVSMASARAVANQLDIPLYRYLGGVNGNILPVPMMNILNGGAHADNNVDFQEFMAMPVGAESFSEALRWGAEVFHTLKGVLKKRGYNTAVGDEGGFAPSLKSNVEAIEVILEAIQQAGYTPGEQIAIALDPAASEFFKDGKYIFKKSDKSEKTSEQMVRWWSDWANKYPIVSIEDGLAEDDWEGWKLLTDELGDKIQLVGDDLFVTNPERLARGIDNGVANSILIKVNQIGTLSETLDAIEMARRNGYTAVISHRSGETEDTFIADLAVATGAGQIKTGSASRTDRVAKYNQLLRIEEQLGAGARFLGIGALNYDGDLSAE.

Glutamine 163 contributes to the (2R)-2-phosphoglycerate binding site. Residue glutamate 205 is the Proton donor of the active site. 3 residues coordinate Mg(2+): aspartate 242, glutamate 286, and aspartate 313. Residues lysine 338, arginine 367, serine 368, and lysine 389 each contribute to the (2R)-2-phosphoglycerate site. The active-site Proton acceptor is the lysine 338.

The protein belongs to the enolase family. The cofactor is Mg(2+).

It is found in the cytoplasm. It localises to the secreted. Its subcellular location is the cell surface. The catalysed reaction is (2R)-2-phosphoglycerate = phosphoenolpyruvate + H2O. Its pathway is carbohydrate degradation; glycolysis; pyruvate from D-glyceraldehyde 3-phosphate: step 4/5. In terms of biological role, catalyzes the reversible conversion of 2-phosphoglycerate (2-PG) into phosphoenolpyruvate (PEP). It is essential for the degradation of carbohydrates via glycolysis. This chain is Enolase, found in Koribacter versatilis (strain Ellin345).